The primary structure comprises 223 residues: Ribonuclease T (223 aa).

An Exonuclease domain is found at 20–194 (VVIDVETAGF…YDTEQTALLF (175 aa)). The Mg(2+) site is built by Asp-23, Glu-25, His-181, and Asp-186. Residue His-181 is the Proton donor/acceptor of the active site.

It belongs to the RNase T family. In terms of assembly, homodimer. Requires Mg(2+) as cofactor.

In terms of biological role, trims short 3' overhangs of a variety of RNA species, leaving a one or two nucleotide 3' overhang. Responsible for the end-turnover of tRNA: specifically removes the terminal AMP residue from uncharged tRNA (tRNA-C-C-A). Also appears to be involved in tRNA biosynthesis. The protein is Ribonuclease T of Cronobacter sakazakii (strain ATCC BAA-894) (Enterobacter sakazakii).